Here is a 404-residue protein sequence, read N- to C-terminus: Nicotinate phosphoribosyltransferase (404 aa).

His224 bears the Phosphohistidine; by autocatalysis mark.

Belongs to the NAPRTase family. Post-translationally, transiently phosphorylated on a His residue during the reaction cycle. Phosphorylation strongly increases the affinity for substrates and increases the rate of nicotinate D-ribonucleotide production. Dephosphorylation regenerates the low-affinity form of the enzyme, leading to product release.

It carries out the reaction nicotinate + 5-phospho-alpha-D-ribose 1-diphosphate + ATP + H2O = nicotinate beta-D-ribonucleotide + ADP + phosphate + diphosphate. The protein operates within cofactor biosynthesis; NAD(+) biosynthesis; nicotinate D-ribonucleotide from nicotinate: step 1/1. Its function is as follows. Catalyzes the synthesis of beta-nicotinate D-ribonucleotide from nicotinate and 5-phospho-D-ribose 1-phosphate at the expense of ATP. The protein is Nicotinate phosphoribosyltransferase of Proteus mirabilis (strain HI4320).